A 192-amino-acid chain; its full sequence is dTTP/UTP pyrophosphatase (192 aa).

The active-site Proton acceptor is Asp71.

Belongs to the Maf family. YhdE subfamily. A divalent metal cation serves as cofactor.

It is found in the cytoplasm. The enzyme catalyses dTTP + H2O = dTMP + diphosphate + H(+). It carries out the reaction UTP + H2O = UMP + diphosphate + H(+). Functionally, nucleoside triphosphate pyrophosphatase that hydrolyzes dTTP and UTP. May have a dual role in cell division arrest and in preventing the incorporation of modified nucleotides into cellular nucleic acids. This chain is dTTP/UTP pyrophosphatase, found in Pseudoalteromonas atlantica (strain T6c / ATCC BAA-1087).